The sequence spans 405 residues: Tryptophan synthase beta chain (405 aa).

Residue Lys98 is modified to N6-(pyridoxal phosphate)lysine.

Belongs to the TrpB family. In terms of assembly, tetramer of two alpha and two beta chains. Requires pyridoxal 5'-phosphate as cofactor.

It catalyses the reaction (1S,2R)-1-C-(indol-3-yl)glycerol 3-phosphate + L-serine = D-glyceraldehyde 3-phosphate + L-tryptophan + H2O. It participates in amino-acid biosynthesis; L-tryptophan biosynthesis; L-tryptophan from chorismate: step 5/5. Functionally, the beta subunit is responsible for the synthesis of L-tryptophan from indole and L-serine. This is Tryptophan synthase beta chain from Xanthomonas campestris pv. campestris (strain 8004).